A 227-amino-acid polypeptide reads, in one-letter code: uncharacterized protein (227 aa).

The signal sequence occupies residues 1–23 (MKKRFSLIMMTGLLFGLTSPAFA). The VWFA domain occupies 36–227 (NVAVLLDASG…FTQQSLMLSK (192 aa)).

This sequence to B.subtilis YwmD.

This is an uncharacterized protein from Bacillus subtilis (strain 168).